We begin with the raw amino-acid sequence, 861 residues long: ATP-dependent helicase rhp16 (861 aa).

The segment covering 1-13 has biased composition (polar residues); sequence MGTSCNKINSNSN. The disordered stretch occupies residues 1-217; sequence MGTSCNKINS…KSIPSHERTH (217 aa). Composition is skewed to basic and acidic residues over residues 14-23 and 38-57; these read KGKENMHFVL and VERD…KEFE. Polar residues predominate over residues 60 to 82; that stretch reads LSTNKKLIIQSNNTSSQHSTPPL. Residues 83–95 are compositionally biased toward low complexity; sequence SISDTSTHTGSST. Positions 96 to 106 are enriched in polar residues; the sequence is DNVEANPNTGF. The span at 109-123 shows a compositional bias: basic residues; sequence ARKRSLRSSNLKKKF. Over residues 131–145 the composition is skewed to acidic residues; sequence ESNESEFIDDDESDE. The span at 193–204 shows a compositional bias: low complexity; it reads ARASSSASSSSR. Positions 268–442 constitute a Helicase ATP-binding domain; sequence RQEDSSFGGG…FSLLRFLRAD (175 aa). 281 to 288 lines the ATP pocket; that stretch reads DEMGMGKT. The DEAH box motif lies at 393 to 396; the sequence is DEAH. An RING-type zinc finger spans residues 609–652; that stretch reads CKICDEVAQDAIESRCHHTFCRLCVTEYINAAGDGENVNCPSCF. A Helicase C-terminal domain is found at 695 to 848; that stretch reads LVEELYLLRK…TIDQDEKALN (154 aa).

Belongs to the SNF2/RAD54 helicase family.

The protein resides in the nucleus. In terms of biological role, involved in global genome repair (GGR) via nucleotide excision repair (NER), in conjunction with rhp7, after UV irradiation. The sequence is that of ATP-dependent helicase rhp16 (rhp16) from Schizosaccharomyces pombe (strain 972 / ATCC 24843) (Fission yeast).